A 490-amino-acid polypeptide reads, in one-letter code: Putative alanine aminotransferase (490 aa).

Positions 157, 158, 183, 239, and 308 each coordinate pyridoxal 5'-phosphate. Lys-311 carries the post-translational modification N6-(pyridoxal phosphate)lysine. Residue Arg-320 coordinates pyridoxal 5'-phosphate.

Belongs to the class-I pyridoxal-phosphate-dependent aminotransferase family. Alanine aminotransferase subfamily. Homodimer. It depends on pyridoxal 5'-phosphate as a cofactor.

The protein localises to the cytoplasm. Its subcellular location is the mitochondrion. It carries out the reaction L-alanine + 2-oxoglutarate = pyruvate + L-glutamate. It functions in the pathway amino-acid degradation; L-alanine degradation via transaminase pathway; pyruvate from L-alanine: step 1/1. In terms of biological role, alanine aminotransferase involved in both alanine biosynthesis and utilization. The chain is Putative alanine aminotransferase (alt1) from Schizosaccharomyces pombe (strain 972 / ATCC 24843) (Fission yeast).